Consider the following 541-residue polypeptide: MEEVTSQEAAESPRGHFQPLENQSECLSPELRFLQDTDMEQGFSGGFPISKPDGISEREQDLQVFDLESKNREVIRGDCSDGETREENKLLIPKRKISEEVHSYKVRVGKFKQDIAQVPETREVYKSEDRLERLQEILRKFLFLEREFRQITISKKTFSSEKNTEPEKSFSLDSTLDTDQRVLRIQTTDDSKYDMNFNQNPAVGEQEPINLTENFQSTDYKESLMDLSHLNKWESMPTTDRSYKCDTCGKTFHQASALTRHQRIHTREKPYKCKECEKSFSQSSSLSRHKRIHTREKSYKCEASDKSCDAPDKSCSQSSDVLQHKKGHAKAKSYKCGTCERVFSRSVHLTQHQRTHKDMSCKCTVCGSDFCHTSYLVEHQRLHHQEKSYEYDECGLAYVKQQGIRFQEKPYSCNECGKDFRLNSHLIQHQRIHTGEKLHECNECGKSFSQTSCLIQHHKMHRKEKSYEYNNYEESFSHSSDLTLQQEVPIRERVFDCDAWEENFSQRAHLIQHERVHTKEKPYECSELGETFSQVQASFNM.

The tract at residues 1–22 (MEEVTSQEAAESPRGHFQPLEN) is disordered. C2H2-type zinc fingers lie at residues 243–265 (YKCDTCGKTFHQASALTRHQRIH), 271–293 (YKCKECEKSFSQSSSLSRHKRIH), 334–356 (YKCGTCERVFSRSVHLTQHQRTH), 361–383 (CKCTVCGSDFCHTSYLVEHQRLH), 411–433 (YSCNECGKDFRLNSHLIQHQRIH), and 439–461 (HECNECGKSFSQTSCLIQHHKMH). The C2H2-type 7; degenerate zinc finger occupies 495–517 (FDCDAWEENFSQRAHLIQHERVH).

Belongs to the krueppel C2H2-type zinc-finger protein family. Interacts with VAV1 and CDK4. Interacts with INTS13; promoting association with the integrator complex.

Its subcellular location is the nucleus. Its function is as follows. Probable transcription factor. The polypeptide is Zinc finger protein 655 (Znf655) (Mus musculus (Mouse)).